Here is a 95-residue protein sequence, read N- to C-terminus: Small ribosomal subunit protein bS18 (95 aa).

The protein belongs to the bacterial ribosomal protein bS18 family. In terms of assembly, part of the 30S ribosomal subunit. Forms a tight heterodimer with protein bS6.

Its function is as follows. Binds as a heterodimer with protein bS6 to the central domain of the 16S rRNA, where it helps stabilize the platform of the 30S subunit. In Rickettsia rickettsii (strain Sheila Smith), this protein is Small ribosomal subunit protein bS18.